A 1142-amino-acid polypeptide reads, in one-letter code: Coiled-coil domain-containing protein 40 (1142 aa).

Disordered regions lie at residues 1–197 (MAEP…QVLP) and 251–274 (PSTE…AEDE). Composition is skewed to basic and acidic residues over residues 11–27 (SHPE…EGNN) and 35–55 (PEKD…HPEE). The segment covering 63–96 (AIEEGEVETEGEAAVEGEEEAVSYGDAESEEEYY) has biased composition (acidic residues). Ser252 is subject to Phosphoserine. Residues 265-274 (EGSDEEAEDE) are compositionally biased toward acidic residues. Coiled coils occupy residues 293–319 (AALK…ATKQ), 349–470 (HDRH…QAED), 526–627 (QAKS…LRRK), 684–950 (TSSR…LGQL), and 1005–1054 (VRKA…LTRL).

Belongs to the CCDC40 family.

The protein localises to the cytoplasm. It is found in the cell projection. The protein resides in the cilium. Its function is as follows. Required for assembly of dynein regulatory complex (DRC) and inner dynein arm (IDA) complexes, which are responsible for ciliary beat regulation, thereby playing a central role in motility in cilia and flagella. Probably acts together with CCDC39 to form a molecular ruler that determines the 96 nanometer (nm) repeat length and arrangements of components in cilia and flagella. Not required for outer dynein arm complexes assembly. Required for axonemal recruitment of CCDC39. This Homo sapiens (Human) protein is Coiled-coil domain-containing protein 40.